We begin with the raw amino-acid sequence, 162 residues long: Nucleotide-binding protein SCO4614 (162 aa).

The protein belongs to the YajQ family.

It localises to the cytoplasm. It is found in the nucleoid. Functionally, nucleotide-binding protein. The chain is Nucleotide-binding protein SCO4614 from Streptomyces coelicolor (strain ATCC BAA-471 / A3(2) / M145).